The chain runs to 654 residues: Probable protein phosphatase 2C 23 (654 aa).

A disordered region spans residues 11–30 (CLTGGAGRNKKPELSILEPD). Ser147 is subject to Phosphoserine. In terms of domain architecture, PPM-type phosphatase spans 243–645 (DVSLESQNLQ…DDVSIVVISL (403 aa)). The Mn(2+) site is built by Asp280 and Gly281. The interval 309 to 336 (DDPKTDAKSSDEADVENRDSSSEKKSKN) is disordered. Mn(2+) is bound by residues Asp573 and Asp636.

It belongs to the PP2C family. Mg(2+) serves as cofactor. It depends on Mn(2+) as a cofactor. In terms of tissue distribution, expressed in seedlings, roots, leaves, stems, young inflorescences, flowers and siliques.

It localises to the nucleus. The catalysed reaction is O-phospho-L-seryl-[protein] + H2O = L-seryl-[protein] + phosphate. The enzyme catalyses O-phospho-L-threonyl-[protein] + H2O = L-threonyl-[protein] + phosphate. Its function is as follows. Involved in leaf development regulation. The protein is Probable protein phosphatase 2C 23 (PLL4) of Arabidopsis thaliana (Mouse-ear cress).